The following is a 521-amino-acid chain: Cyclic AMP-responsive element-binding protein 3-like protein 2 (521 aa).

The Cytoplasmic portion of the chain corresponds to 1-378; the sequence is MEVLESGEQS…CKLAGTQTGT (378 aa). The segment covering 83–103 has biased composition (polar residues); that stretch reads YSLSEEPRTQSPFTHAATSDS. A disordered region spans residues 83–106; it reads YSLSEEPRTQSPFTHAATSDSFND. Phosphoserine is present on S93. A Glycyl lysine isopeptide (Lys-Gly) (interchain with G-Cter in SUMO2) cross-link involves residue K178. S191 carries the phosphoserine modification. The tract at residues 196–264 is disordered; that stretch reads SVDQLHLPPT…PHKLQGSGPL (69 aa). The segment covering 208–220 has biased composition (low complexity); that stretch reads SSHSSDSEGSLSP. The region spanning 294–357 is the bZIP domain; it reads ALKKIRRKIK…RTLLQQLQKL (64 aa). The interval 296-325 is basic motif; that stretch reads KKIRRKIKNKISAQESRRKKKEYMDSLEKK. The leucine-zipper stretch occupies residues 336–357; it reads LRKKVEVLENTNRTLLQQLQKL. The chain crosses the membrane as a helical; Signal-anchor for type II membrane protein span at residues 379-399; that stretch reads CLMVVVLCFAVAFGSFFQGYG. Residues 400–521 lie on the Lumenal side of the membrane; the sequence is PYPSATKMAL…ELERRVNATF (122 aa). The S1P recognition motif lies at 427-430; the sequence is RNLL. 3 N-linked (GlcNAc...) asparagine glycosylation sites follow: N481, N505, and N518.

This sequence belongs to the bZIP family. ATF subfamily. In terms of assembly, binds DNA as a dimer. Upon ER stress, translocated to the Golgi apparatus, where it is processed by regulated intramembrane proteolysis (RIP) to release the cytosol-facing N-terminal transcription factor domain. The cleavage is performed sequentially by site-1 and site-2 proteases (S1P/MBTPS1 and S2P/MBTPS2). Post-translationally, N-glycosylated. In terms of processing, ubiquitinated by HRD1/SYVN1; undergoes 'Lys-48'-linked ubiquitination, followed by rapid proteasomal degradation under normal conditions. Upon ER stress, SYVN1 E3 ubiquitin-protein ligase dissociates from its substrate, ubiquitination does not occur and CREB3L2 is stabilized. In terms of tissue distribution, widely expressed, including in lung, bladder, ovary, testis and spleen. Highly expressed in chondrocytes.

The protein localises to the endoplasmic reticulum membrane. The protein resides in the nucleus. Its function is as follows. Transcription factor involved in unfolded protein response (UPR). In the absence of endoplasmic reticulum (ER) stress, inserted into ER membranes, with N-terminal DNA-binding and transcription activation domains oriented toward the cytosolic face of the membrane. In response to ER stress, transported to the Golgi, where it is cleaved in a site-specific manner by resident proteases S1P/MBTPS1 and S2P/MBTPS2. The released N-terminal cytosolic domain is translocated to the nucleus to effect transcription of specific target genes. Plays a critical role in chondrogenesis by activating the transcription of SEC23A, which promotes the transport and secretion of cartilage matrix proteins, and possibly that of ER biogenesis-related genes. In a neuroblastoma cell line, protects cells from ER stress-induced death. In vitro activates transcription of target genes via direct binding to the CRE site. This chain is Cyclic AMP-responsive element-binding protein 3-like protein 2 (Creb3l2), found in Mus musculus (Mouse).